We begin with the raw amino-acid sequence, 114 residues long: Large ribosomal subunit protein bL21c (114 aa).

The protein belongs to the bacterial ribosomal protein bL21 family. Part of the 50S ribosomal subunit.

The protein localises to the plastid. It is found in the chloroplast. Functionally, this protein binds to 23S rRNA. This Staurastrum punctulatum (Green alga) protein is Large ribosomal subunit protein bL21c.